The primary structure comprises 61 residues: Photosystem II reaction center protein K (61 aa).

The propeptide occupies methionine 1 to alanine 24. A helical membrane pass occupies residues methionine 40–phenylalanine 60.

The protein belongs to the PsbK family. In terms of assembly, PSII is composed of 1 copy each of membrane proteins PsbA, PsbB, PsbC, PsbD, PsbE, PsbF, PsbH, PsbI, PsbJ, PsbK, PsbL, PsbM, PsbT, PsbX, PsbY, PsbZ, Psb30/Ycf12, at least 3 peripheral proteins of the oxygen-evolving complex and a large number of cofactors. It forms dimeric complexes.

The protein resides in the plastid. Its subcellular location is the chloroplast thylakoid membrane. Its function is as follows. One of the components of the core complex of photosystem II (PSII). PSII is a light-driven water:plastoquinone oxidoreductase that uses light energy to abstract electrons from H(2)O, generating O(2) and a proton gradient subsequently used for ATP formation. It consists of a core antenna complex that captures photons, and an electron transfer chain that converts photonic excitation into a charge separation. In Sinapis alba (White mustard), this protein is Photosystem II reaction center protein K.